The primary structure comprises 178 residues: Fatty-acid and retinol-binding protein 1 (178 aa).

Residues 1 to 16 (MYHQLILMALIGVIMA) form the signal peptide. 2 N-linked (GlcNAc...) asparagine glycosylation sites follow: N44 and N75. Coiled-coil stretches lie at residues 67–89 (DAAL…ELRN) and 122–154 (QKLD…LKAT). N-linked (GlcNAc...) asparagine glycosylation occurs at N157.

The protein belongs to the fatty-acid and retinol-binding protein (FARBP) family. N-glycosylated.

The protein resides in the secreted. In terms of biological role, binds retinol and different fatty acids. The protein is Fatty-acid and retinol-binding protein 1 of Onchocerca ochengi (Filarial nematode worm).